Consider the following 725-residue polypeptide: Palmitoyltransferase AKR1 (725 aa).

At 1-303 (MGTIAMASIN…LKDKRSFVTR (303 aa)) the chain is on the cytoplasmic side. 5 ANK repeats span residues 84–113 (EGITPLHWAAINNQYAMCKFLIEHGAEINR), 118–147 (SIATPLQWAAQRCHYYTVNLLLQHGADPLV), 151–180 (QGYNTLHISTFNGNVLLLVLLLHQGIPVDV), 184–213 (FGHTALMWAAYKGFPQCVDLFLRWGASVHA), and 217–246 (QGFTALHWALVKGSPGCILKLIEYGADRFA). Residues 304 to 324 (FLFFWPFVLVWAMLVAMSSAP) form a helical membrane-spanning segment. Over 325-326 (VY) the chain is Lumenal. The helical transmembrane segment at 327 to 347 (IGVPLGIAAVYAIQWVAQQVL) threads the bilayer. Residues 348–364 (EYAPSDMRHFHKTPWLT) lie on the Cytoplasmic side of the membrane. Residues 365-385 (GIFAATLFWTGVNWLTTVLFA) traverse the membrane as a helical segment. Over 386–397 (TTLGAPEGKGHG) the chain is Lumenal. Residues 398–418 (ILNFLFALFFGFTVYFYIASM) form a helical membrane-spanning segment. At 419–495 (RYDPGFVPKM…NCVGINNHRH (77 aa)) the chain is on the cytoplasmic side. The 51-residue stretch at 451–501 (NFCVTCMIQTPLRSKHCRRCQRCVAKHDHHCPWVYNCVGINNHRHFFFYLI) folds into the DHHC domain. The active-site S-palmitoyl cysteine intermediate is the Cys-481. Residues 496–516 (FFFYLISLTMGIVSYDFLLYY) traverse the membrane as a helical segment. Residues 517–547 (YFDTVSKNASETCNVLSPTLCKYINADSYTS) are Lumenal-facing. The chain crosses the membrane as a helical span at residues 548–568 (ILAIWITMQLLWVTMLLFTQF). Residues 569–725 (IQVARAMTTY…YEAVGTEDVV (157 aa)) lie on the Cytoplasmic side of the membrane.

It belongs to the DHHC palmitoyltransferase family. AKR/ZDHHC17 subfamily.

The protein localises to the early endosome membrane. It localises to the golgi apparatus membrane. It carries out the reaction L-cysteinyl-[protein] + hexadecanoyl-CoA = S-hexadecanoyl-L-cysteinyl-[protein] + CoA. In terms of biological role, palmitoyltransferase specific for casein kinase 1. In Gibberella zeae (strain ATCC MYA-4620 / CBS 123657 / FGSC 9075 / NRRL 31084 / PH-1) (Wheat head blight fungus), this protein is Palmitoyltransferase AKR1 (AKR1).